A 357-amino-acid chain; its full sequence is Red-sensitive opsin (357 aa).

At 1–49 (MAEQWGKQVFAARRQNEDTTRGSAFTYTNSNHTRDPFEGPNYHIAPRWV) the chain is on the extracellular side. The N-linked (GlcNAc...) asparagine glycan is linked to Asn31. The helical transmembrane segment at 50-74 (YNLATLWMFFVVVLSVFTNGLVLVA) threads the bilayer. Residues 75 to 86 (TAKFKKLRHPLN) are Cytoplasmic-facing. A helical membrane pass occupies residues 87 to 112 (WILSNLAIADLGETVFASTISVCNQF). Over 113 to 126 (FGYFILGHPMCVFE) the chain is Extracellular. Cys123 and Cys200 are oxidised to a cystine. A helical membrane pass occupies residues 127–146 (GYVVSTCGIAALWSLTIISW). The Cytoplasmic portion of the chain corresponds to 147–165 (ERWVVVCKPFGNVKFDAKW). Residues 166–189 (AIGGIVFSWVWSAVWCAPPVFGWS) traverse the membrane as a helical segment. At 190–215 (RYWPHGLKTSCGPDVFSGSDDPGVQS) the chain is on the extracellular side. A helical transmembrane segment spans residues 216–243 (YMIVLMITCCIIPLAIIILCYLAVWLAI). Residues 244–265 (RAVAMQQKESESTQKAEREVSR) lie on the Cytoplasmic side of the membrane. Residues 266–289 (MVVVMIVAYCVCWGPYTFFACFAA) traverse the membrane as a helical segment. Over 290–297 (ANPGYAFH) the chain is Extracellular. A helical transmembrane segment spans residues 298–322 (PLAAAMPAYFAKSATIYNPVIYVFM). Lys309 is modified (N6-(retinylidene)lysine). Residues 323–357 (NRQFRTCIMQLFGKQVDDGSEVSTSKTEVSSVAPA) are Cytoplasmic-facing.

It belongs to the G-protein coupled receptor 1 family. Opsin subfamily. Phosphorylated on some or all of the serine and threonine residues present in the C-terminal region. As to expression, the color pigments are found in the cone photoreceptor cells.

The protein localises to the membrane. Functionally, visual pigments are the light-absorbing molecules that mediate vision. They consist of an apoprotein, opsin, covalently linked to cis-retinal. The polypeptide is Red-sensitive opsin (Oryzias latipes (Japanese rice fish)).